A 240-amino-acid chain; its full sequence is Biosynthetic peptidoglycan transglycosylase (240 aa).

Residues 12–31 (ALMWFMVGSVLLVLLLRFVP) traverse the membrane as a helical segment.

This sequence belongs to the glycosyltransferase 51 family.

Its subcellular location is the cell inner membrane. The enzyme catalyses [GlcNAc-(1-&gt;4)-Mur2Ac(oyl-L-Ala-gamma-D-Glu-L-Lys-D-Ala-D-Ala)](n)-di-trans,octa-cis-undecaprenyl diphosphate + beta-D-GlcNAc-(1-&gt;4)-Mur2Ac(oyl-L-Ala-gamma-D-Glu-L-Lys-D-Ala-D-Ala)-di-trans,octa-cis-undecaprenyl diphosphate = [GlcNAc-(1-&gt;4)-Mur2Ac(oyl-L-Ala-gamma-D-Glu-L-Lys-D-Ala-D-Ala)](n+1)-di-trans,octa-cis-undecaprenyl diphosphate + di-trans,octa-cis-undecaprenyl diphosphate + H(+). It participates in cell wall biogenesis; peptidoglycan biosynthesis. Functionally, peptidoglycan polymerase that catalyzes glycan chain elongation from lipid-linked precursors. In Pseudomonas fluorescens (strain ATCC BAA-477 / NRRL B-23932 / Pf-5), this protein is Biosynthetic peptidoglycan transglycosylase.